A 147-amino-acid polypeptide reads, in one-letter code: Ribosome maturation factor RimP (147 aa).

The protein belongs to the RimP family.

The protein resides in the cytoplasm. Its function is as follows. Required for maturation of 30S ribosomal subunits. This chain is Ribosome maturation factor RimP, found in Legionella pneumophila (strain Lens).